Consider the following 175-residue polypeptide: Alpha-crystallin B chain (175 aa).

M1 carries the N-acetylmethionine modification. The residue at position 19 (S19) is a Phosphoserine. S41 carries O-linked (GlcNAc) serine glycosylation. Residues S45 and S59 each carry the phosphoserine modification. A sHSP domain is found at 56–164; the sequence is RAPSWIDTGL…PERTIPITRE (109 aa). Position 83 (H83) interacts with Zn(2+). N-linked (Glc) (glycation) lysine glycosylation is present at K90. Position 92 is an N6-acetyllysine; alternate (K92). N-linked (Glc) (glycation) lysine; alternate glycosylation is present at K92. 4 residues coordinate Zn(2+): H104, E106, H111, and H119. Residues 144 to 175 are disordered; that stretch reads TVNGPRKQASGPERTIPITREEKPAVTAAPKK. Residue K166 is modified to N6-acetyllysine. T170 carries an O-linked (GlcNAc) threonine glycan.

The protein belongs to the small heat shock protein (HSP20) family. Heteromer composed of three CRYAA and one CRYAB subunits. Aggregates with homologous proteins, including the small heat shock protein HSPB1, to form large heteromeric complexes. Inter-subunit bridging via zinc ions enhances stability, which is crucial as there is no protein turn over in the lens. Interacts with HSPBAP1 and TTN/titin. Interacts with TMEM109; in the cellular response to DNA damage. Interacts with DES; binds rapidly during early stages of DES filament assembly and a reduced binding seen in the later stages. Interacts with TMED10; the interaction mediates the translocation from the cytoplasm into the ERGIC (endoplasmic reticulum-Golgi intermediate compartment) and thereby secretion. Interacts with ATP6V1A and with MTOR, forming a ternary complex. It is not known whether either Lys-90, or Lys-92, or both are glycated. Lens as well as other tissues.

Its subcellular location is the cytoplasm. It is found in the nucleus. The protein localises to the secreted. The protein resides in the lysosome. Its function is as follows. May contribute to the transparency and refractive index of the lens. Has chaperone-like activity, preventing aggregation of various proteins under a wide range of stress conditions. In lens epithelial cells, stabilizes the ATP6V1A protein, preventing its degradation by the proteasome. This Bos taurus (Bovine) protein is Alpha-crystallin B chain (CRYAB).